The chain runs to 287 residues: S-methyl-5'-thioadenosine phosphorylase (287 aa).

Phosphate contacts are provided by residues Thr13 and 55–56 (RH). Met186 provides a ligand contact to substrate. Thr187 contacts phosphate. A substrate-binding site is contributed by 210–212 (DYD).

The protein belongs to the PNP/MTAP phosphorylase family. MTAP subfamily. Homohexamer. Dimer of a homotrimer.

It catalyses the reaction S-methyl-5'-thioadenosine + phosphate = 5-(methylsulfanyl)-alpha-D-ribose 1-phosphate + adenine. It functions in the pathway amino-acid biosynthesis; L-methionine biosynthesis via salvage pathway; S-methyl-5-thio-alpha-D-ribose 1-phosphate from S-methyl-5'-thioadenosine (phosphorylase route): step 1/1. Its function is as follows. Catalyzes the reversible phosphorylation of S-methyl-5'-thioadenosine (MTA) to adenine and 5-methylthioribose-1-phosphate. Involved in the breakdown of MTA, a major by-product of polyamine biosynthesis. Responsible for the first step in the methionine salvage pathway after MTA has been generated from S-adenosylmethionine. Has broad substrate specificity with 6-aminopurine nucleosides as preferred substrates. In Leptospira interrogans serogroup Icterohaemorrhagiae serovar Lai (strain 56601), this protein is S-methyl-5'-thioadenosine phosphorylase.